Here is a 1153-residue protein sequence, read N- to C-terminus: Otoancorin (1153 aa).

Positions 1 to 22 are cleaved as a signal peptide; sequence MSQEPTTYSLFLFLFLSHGVSS. A glycan (N-linked (GlcNAc...) asparagine) is linked at N156. A glycan (N-linked (GlcNAc...) (complex) asparagine) is linked at N211. 10 N-linked (GlcNAc...) asparagine glycosylation sites follow: N244, N289, N321, N394, N398, N460, N544, N812, N911, and N974. The segment at 1109–1128 is disordered; sequence HSWQDAPASAGPTRTSSSRS. The GPI-anchor amidated alanine moiety is linked to residue A1130. Residues 1131 to 1153 constitute a propeptide, removed in mature form; that stretch reads GALQSWGLWLGCPLLVLMAKLLW.

It belongs to the stereocilin family.

It is found in the apical cell membrane. The protein resides in the secreted. It localises to the extracellular space. Its subcellular location is the extracellular matrix. Its function is as follows. May act as an adhesion molecule. This is Otoancorin (OTOA) from Homo sapiens (Human).